We begin with the raw amino-acid sequence, 658 residues long: MPVGLSVGGALGDPSPSRPFRPSRYVPVSAATAFLVGATTLFLCFTCPWLSEKFSSFIPLYNVVVFLFTLANFCMATFMDPGVFPRAEEDEDKEDDFRAPLYKTVEVRGIQVRMKWCSTCRFYRPPRCSHCSVCDNCVEEFDHHCPWVNNCIGRRNYRYFFLFLLSLTVHIMDVFGFSLLYILHHTKQLDLVQSGVTMAVMCVAGLFFVPVAGLTGFHVVLVARGRTTNEQVTGKFRGGVNPFTHGCFKNIAHVLCSSQAPRYLGRLRKPQSVQVQPPFLRPPLSEAQLAAKVLDNGIQQSKSSLEIMESQSTDADPPPPPKPEHRYPGLPHTQNEECSLLTEAPPTPSLYKYRPAYSSPGKNHTASTHSSKMSRGNSMTESPSVPVTTGQPSYRSDPSLSSRGAAGCRGGAEGGRSGSGGLGGASAFGGRSYPSFTDTLLQSAAASCSSSLRSAHTAHNALGPLISEGTTSTSYKSLANQTRNGSLSYESLLTPSESPEFESAAHELSPPRPHPPHSLSTAAGAAPILGYTSPFLSAQQREGSLQACPAPLRPSPNRAFLRPISSPPSRAPPLSPRARSLGSPPPGPAPGHTPLGKSMSYGGGAELQHRPSSSGGGTSMPNSTIKQNVANHNTHSHKPARGVKKVSGVGGTTYEISV.

The Cytoplasmic segment spans residues 1 to 24; it reads MPVGLSVGGALGDPSPSRPFRPSR. A helical transmembrane segment spans residues 25–45; sequence YVPVSAATAFLVGATTLFLCF. The Extracellular portion of the chain corresponds to 46-56; sequence TCPWLSEKFSS. The chain crosses the membrane as a helical span at residues 57–77; that stretch reads FIPLYNVVVFLFTLANFCMAT. The Cytoplasmic segment spans residues 78–159; it reads FMDPGVFPRA…NCIGRRNYRY (82 aa). A DHHC domain is found at 115–165; sequence KWCSTCRFYRPPRCSHCSVCDNCVEEFDHHCPWVNNCIGRRNYRYFFLFLL. The S-palmitoyl cysteine intermediate role is filled by C145. A helical transmembrane segment spans residues 160-180; it reads FFLFLLSLTVHIMDVFGFSLL. The Extracellular segment spans residues 181–202; that stretch reads YILHHTKQLDLVQSGVTMAVMC. The chain crosses the membrane as a helical span at residues 203-223; sequence VAGLFFVPVAGLTGFHVVLVA. The Cytoplasmic portion of the chain corresponds to 224–658; the sequence is RGRTTNEQVT…VGGTTYEISV (435 aa). 3 disordered regions span residues 306–419, 490–522, and 540–658; these read EIME…RSGS, ESLLTPSESPEFESAAHELSPPRPHPPHSLSTA, and QREG…EISV. Over residues 360 to 398 the composition is skewed to polar residues; sequence PGKNHTASTHSSKMSRGNSMTESPSVPVTTGQPSYRSDP. Over residues 407–419 the composition is skewed to gly residues; sequence GCRGGAEGGRSGS. The span at 565-575 shows a compositional bias: pro residues; the sequence is SSPPSRAPPLS. Over residues 619 to 633 the composition is skewed to polar residues; it reads SMPNSTIKQNVANHN. The segment covering 634 to 644 has biased composition (basic residues); the sequence is THSHKPARGVK.

It belongs to the DHHC palmitoyltransferase family. ERF2/ZDHHC9 subfamily.

It localises to the cell membrane. The catalysed reaction is L-cysteinyl-[protein] + hexadecanoyl-CoA = S-hexadecanoyl-L-cysteinyl-[protein] + CoA. In terms of biological role, palmitoyltransferase that catalyzes the addition of palmitate onto various protein substrates and is involved in a variety of cellular processes. The polypeptide is Palmitoyltransferase ZDHHC5-B (Danio rerio (Zebrafish)).